The following is a 218-amino-acid chain: Pyridoxine/pyridoxamine 5'-phosphate oxidase (218 aa).

Substrate contacts are provided by residues 12–15 (RLAY) and Arg70. Residues 65-70 (RTVLLR), 80-81 (YT), Lys87, and Gln109 contribute to the FMN site. Positions 127, 131, and 135 each coordinate substrate. FMN contacts are provided by residues 145 to 146 (QS) and Trp191. 197–199 (RLH) lines the substrate pocket. Arg201 contributes to the FMN binding site.

It belongs to the pyridoxamine 5'-phosphate oxidase family. Homodimer. Requires FMN as cofactor.

It catalyses the reaction pyridoxamine 5'-phosphate + O2 + H2O = pyridoxal 5'-phosphate + H2O2 + NH4(+). The enzyme catalyses pyridoxine 5'-phosphate + O2 = pyridoxal 5'-phosphate + H2O2. It participates in cofactor metabolism; pyridoxal 5'-phosphate salvage; pyridoxal 5'-phosphate from pyridoxamine 5'-phosphate: step 1/1. The protein operates within cofactor metabolism; pyridoxal 5'-phosphate salvage; pyridoxal 5'-phosphate from pyridoxine 5'-phosphate: step 1/1. In terms of biological role, catalyzes the oxidation of either pyridoxine 5'-phosphate (PNP) or pyridoxamine 5'-phosphate (PMP) into pyridoxal 5'-phosphate (PLP). The sequence is that of Pyridoxine/pyridoxamine 5'-phosphate oxidase from Deinococcus geothermalis (strain DSM 11300 / CIP 105573 / AG-3a).